A 63-amino-acid chain; its full sequence is Large ribosomal subunit protein bL35 (63 aa).

This sequence belongs to the bacterial ribosomal protein bL35 family.

The chain is Large ribosomal subunit protein bL35 from Thermobifida fusca (strain YX).